Reading from the N-terminus, the 137-residue chain is Chaperone protein YscB (137 aa).

Interacts with SycN to form a complex which specifically binds to YopN.

Its subcellular location is the cytoplasm. It is found in the cell inner membrane. Functions as a specific chaperone for YopN. It could facilitate the secretion and the subsequent translocation of YopN. This is Chaperone protein YscB (yscB) from Yersinia pestis.